The sequence spans 545 residues: Arginine-containing cyclodipeptide synthase ateA (545 aa).

Positions 390 to 425 are enriched in polar residues; it reads GNQQTPTQSADMDSTVSHRQQQPASSRSYTSKQNQM. The segment at 390-433 is disordered; the sequence is GNQQTPTQSADMDSTVSHRQQQPASSRSYTSKQNQMPRPLVISV. The short motif at 434–438 is the Conserved DDXXE motif element; that stretch reads DDPSE.

Belongs to the arginine-containing cyclodipeptide synthase family.

The enzyme catalyses L-glutamyl-tRNA(Glu) + L-arginyl-tRNA(Arg) = cyclo(L-arginyl-L-glutamyl) + tRNA(Glu) + tRNA(Arg) + 2 H(+). It functions in the pathway secondary metabolite biosynthesis. Its function is as follows. Arginine-containing cyclodipeptide synthase; part of the cluster that mediates the biosynthesis of a highly modified cyclo-arginine-glutamate dipeptide (cRE). Within the pathway, ateA acts as the scaffold-generating enzyme and is responsible for formation of the cyclo-Arg-Glu diketopiperazine (cRW) from L-arginyl-tRNA(Arg) + L-glutamyl-tRNA(Glu). Additional enzymes from the cluster then further modify the cyclo-Arg-Glu diketopiperazine (cRW) scaffold. The chain is Arginine-containing cyclodipeptide synthase ateA from Aspergillus terreus.